An 818-amino-acid chain; its full sequence is Protocadherin beta-1 (818 aa).

The first 28 residues, 1–28, serve as a signal peptide directing secretion; sequence MAGTRRKSLQNRQVGSLLIFLCISVGDA. At 29–691 the chain is on the extracellular side; that stretch reads TTIRYSVAEE…RKVNPSTKYL (663 aa). 5 Cadherin domains span residues 35 to 133, 138 to 242, 243 to 347, 348 to 452, and 457 to 562; these read VAEE…APVF, PLLK…VPQF, SRLV…PPEV, MVSS…PPIF, and YILT…RPMI. Residues asparagine 169, asparagine 209, asparagine 257, and asparagine 419 are each glycosylated (N-linked (GlcNAc...) asparagine). N-linked (GlcNAc...) asparagine glycosylation occurs at asparagine 568. The 96-residue stretch at 577 to 672 folds into the Cadherin 6 domain; it reads VPRSAEAGYL…LVDGFSEPYL (96 aa). The helical transmembrane segment at 692 to 712 threads the bilayer; that stretch reads VISLVILSFLFLLSVIVIFII. At 713 to 818 the chain is on the cytoplasmic side; sequence HVYQKIKYRE…GHDQVSDDYM (106 aa). Positions 789 to 818 are disordered; sequence MEAGSSLPPNSDRNKSQRLEGHDQVSDDYM. Basic and acidic residues predominate over residues 800–818; the sequence is DRNKSQRLEGHDQVSDDYM.

Its subcellular location is the cell membrane. Potential calcium-dependent cell-adhesion protein. May be involved in the establishment and maintenance of specific neuronal connections in the brain. The sequence is that of Protocadherin beta-1 (PCDHB1) from Homo sapiens (Human).